The sequence spans 366 residues: Chorismate synthase (366 aa).

Positions 48 and 54 each coordinate NADP(+). Residues arginine 132–serine 134, asparagine 244–alanine 245, glycine 289, lysine 304–serine 308, and arginine 330 each bind FMN.

The protein belongs to the chorismate synthase family. In terms of assembly, homotetramer. Requires FMNH2 as cofactor.

The catalysed reaction is 5-O-(1-carboxyvinyl)-3-phosphoshikimate = chorismate + phosphate. It functions in the pathway metabolic intermediate biosynthesis; chorismate biosynthesis; chorismate from D-erythrose 4-phosphate and phosphoenolpyruvate: step 7/7. Catalyzes the anti-1,4-elimination of the C-3 phosphate and the C-6 proR hydrogen from 5-enolpyruvylshikimate-3-phosphate (EPSP) to yield chorismate, which is the branch point compound that serves as the starting substrate for the three terminal pathways of aromatic amino acid biosynthesis. This reaction introduces a second double bond into the aromatic ring system. This Methylorubrum extorquens (strain PA1) (Methylobacterium extorquens) protein is Chorismate synthase.